We begin with the raw amino-acid sequence, 351 residues long: Holliday junction branch migration complex subunit RuvB (351 aa).

Residues 1–186 (MDEKIETRLI…FGIVQRLEFY (186 aa)) are large ATPase domain (RuvB-L). Residues isoleucine 25, arginine 26, glycine 67, lysine 70, threonine 71, threonine 72, 133–135 (EDF), arginine 176, tyrosine 186, and arginine 223 contribute to the ATP site. A Mg(2+)-binding site is contributed by threonine 71. Residues 187–257 (RIPDLIHIVK…IAKEALDLLN (71 aa)) are small ATPAse domain (RuvB-S). The interval 260–351 (IRGLDVMDRK…ENFDLLGKVE (92 aa)) is head domain (RuvB-H). Residues arginine 296, arginine 315, and arginine 320 each contribute to the DNA site.

Belongs to the RuvB family. Homohexamer. Forms an RuvA(8)-RuvB(12)-Holliday junction (HJ) complex. HJ DNA is sandwiched between 2 RuvA tetramers; dsDNA enters through RuvA and exits via RuvB. An RuvB hexamer assembles on each DNA strand where it exits the tetramer. Each RuvB hexamer is contacted by two RuvA subunits (via domain III) on 2 adjacent RuvB subunits; this complex drives branch migration. In the full resolvosome a probable DNA-RuvA(4)-RuvB(12)-RuvC(2) complex forms which resolves the HJ.

It localises to the cytoplasm. The catalysed reaction is ATP + H2O = ADP + phosphate + H(+). Its function is as follows. The RuvA-RuvB-RuvC complex processes Holliday junction (HJ) DNA during genetic recombination and DNA repair, while the RuvA-RuvB complex plays an important role in the rescue of blocked DNA replication forks via replication fork reversal (RFR). RuvA specifically binds to HJ cruciform DNA, conferring on it an open structure. The RuvB hexamer acts as an ATP-dependent pump, pulling dsDNA into and through the RuvAB complex. RuvB forms 2 homohexamers on either side of HJ DNA bound by 1 or 2 RuvA tetramers; 4 subunits per hexamer contact DNA at a time. Coordinated motions by a converter formed by DNA-disengaged RuvB subunits stimulates ATP hydrolysis and nucleotide exchange. Immobilization of the converter enables RuvB to convert the ATP-contained energy into a lever motion, pulling 2 nucleotides of DNA out of the RuvA tetramer per ATP hydrolyzed, thus driving DNA branch migration. The RuvB motors rotate together with the DNA substrate, which together with the progressing nucleotide cycle form the mechanistic basis for DNA recombination by continuous HJ branch migration. Branch migration allows RuvC to scan DNA until it finds its consensus sequence, where it cleaves and resolves cruciform DNA. The chain is Holliday junction branch migration complex subunit RuvB from Coxiella burnetii (strain CbuG_Q212) (Coxiella burnetii (strain Q212)).